A 333-amino-acid polypeptide reads, in one-letter code: Ketol-acid reductoisomerase (NADP(+)) (333 aa).

Residues 2-182 (ANIYYDSDCD…GGGRAGILET (181 aa)) enclose the KARI N-terminal Rossmann domain. Residues 25-28 (YGSQ), lysine 48, serine 51, serine 53, and 83-86 (DTIQ) each bind NADP(+). Histidine 108 is a catalytic residue. An NADP(+)-binding site is contributed by glycine 134. Residues 183–331 (SFREETETDL…KKLRSMMKWL (149 aa)) form the KARI C-terminal knotted domain. Residues aspartate 191, glutamate 195, glutamate 227, and glutamate 231 each contribute to the Mg(2+) site. A substrate-binding site is contributed by serine 252.

Belongs to the ketol-acid reductoisomerase family. It depends on Mg(2+) as a cofactor.

The catalysed reaction is (2R)-2,3-dihydroxy-3-methylbutanoate + NADP(+) = (2S)-2-acetolactate + NADPH + H(+). It carries out the reaction (2R,3R)-2,3-dihydroxy-3-methylpentanoate + NADP(+) = (S)-2-ethyl-2-hydroxy-3-oxobutanoate + NADPH + H(+). It participates in amino-acid biosynthesis; L-isoleucine biosynthesis; L-isoleucine from 2-oxobutanoate: step 2/4. The protein operates within amino-acid biosynthesis; L-valine biosynthesis; L-valine from pyruvate: step 2/4. Involved in the biosynthesis of branched-chain amino acids (BCAA). Catalyzes an alkyl-migration followed by a ketol-acid reduction of (S)-2-acetolactate (S2AL) to yield (R)-2,3-dihydroxy-isovalerate. In the isomerase reaction, S2AL is rearranged via a Mg-dependent methyl migration to produce 3-hydroxy-3-methyl-2-ketobutyrate (HMKB). In the reductase reaction, this 2-ketoacid undergoes a metal-dependent reduction by NADPH to yield (R)-2,3-dihydroxy-isovalerate. The sequence is that of Ketol-acid reductoisomerase (NADP(+)) from Leptospira interrogans serogroup Icterohaemorrhagiae serovar copenhageni (strain Fiocruz L1-130).